The primary structure comprises 697 residues: Heat shock protein homolog SSE1 (697 aa).

The span at 664–674 shows a compositional bias: low complexity; it reads EMAEKLAAQRA. The segment at 664–697 is disordered; that stretch reads EMAEKLAAQRAAEQKAQESKAESDKDAEGDIDLD. Basic and acidic residues predominate over residues 675 to 691; it reads AEQKAQESKAESDKDAE.

Belongs to the heat shock protein 70 family.

The protein resides in the cytoplasm. This Eremothecium gossypii (strain ATCC 10895 / CBS 109.51 / FGSC 9923 / NRRL Y-1056) (Yeast) protein is Heat shock protein homolog SSE1 (SSE1).